Here is a 407-residue protein sequence, read N- to C-terminus: Argininosuccinate synthase (407 aa).

ATP is bound by residues 11–19 and Ala-38; that span reads AYSGGLDTS. Residues Tyr-91 and Ser-96 each contribute to the L-citrulline site. Residue Gly-121 coordinates ATP. L-aspartate-binding residues include Thr-123, Asn-127, and Asp-128. Asn-127 contacts L-citrulline. Arg-131, Ser-181, Ser-190, Glu-266, and Tyr-278 together coordinate L-citrulline.

Belongs to the argininosuccinate synthase family. Type 1 subfamily. Homotetramer.

It localises to the cytoplasm. It carries out the reaction L-citrulline + L-aspartate + ATP = 2-(N(omega)-L-arginino)succinate + AMP + diphosphate + H(+). The protein operates within amino-acid biosynthesis; L-arginine biosynthesis; L-arginine from L-ornithine and carbamoyl phosphate: step 2/3. In Campylobacter concisus (strain 13826), this protein is Argininosuccinate synthase.